Reading from the N-terminus, the 95-residue chain is Aspartyl/glutamyl-tRNA(Asn/Gln) amidotransferase subunit C (95 aa).

This sequence belongs to the GatC family. As to quaternary structure, heterotrimer of A, B and C subunits.

The enzyme catalyses L-glutamyl-tRNA(Gln) + L-glutamine + ATP + H2O = L-glutaminyl-tRNA(Gln) + L-glutamate + ADP + phosphate + H(+). The catalysed reaction is L-aspartyl-tRNA(Asn) + L-glutamine + ATP + H2O = L-asparaginyl-tRNA(Asn) + L-glutamate + ADP + phosphate + 2 H(+). In terms of biological role, allows the formation of correctly charged Asn-tRNA(Asn) or Gln-tRNA(Gln) through the transamidation of misacylated Asp-tRNA(Asn) or Glu-tRNA(Gln) in organisms which lack either or both of asparaginyl-tRNA or glutaminyl-tRNA synthetases. The reaction takes place in the presence of glutamine and ATP through an activated phospho-Asp-tRNA(Asn) or phospho-Glu-tRNA(Gln). This chain is Aspartyl/glutamyl-tRNA(Asn/Gln) amidotransferase subunit C, found in Bradyrhizobium sp. (strain BTAi1 / ATCC BAA-1182).